The primary structure comprises 229 residues: 2-C-methyl-D-erythritol 4-phosphate cytidylyltransferase (229 aa).

The protein belongs to the IspD/TarI cytidylyltransferase family. IspD subfamily.

It carries out the reaction 2-C-methyl-D-erythritol 4-phosphate + CTP + H(+) = 4-CDP-2-C-methyl-D-erythritol + diphosphate. It functions in the pathway isoprenoid biosynthesis; isopentenyl diphosphate biosynthesis via DXP pathway; isopentenyl diphosphate from 1-deoxy-D-xylulose 5-phosphate: step 2/6. In terms of biological role, catalyzes the formation of 4-diphosphocytidyl-2-C-methyl-D-erythritol from CTP and 2-C-methyl-D-erythritol 4-phosphate (MEP). The polypeptide is 2-C-methyl-D-erythritol 4-phosphate cytidylyltransferase (Clostridium botulinum (strain 657 / Type Ba4)).